The chain runs to 408 residues: MIQKPRGTRDMLPDEMERRREIEARMRARARLYGFREIATPVFEELELFTIRSGEGIINEMYVFEDKGGRSLALRPELTAPVLRMYVEEGRSLNKPVKWCYFADCFRYERPQKGRYRQFWQFGAELIGADSAMGDAEVITLGYDLLRTAGVTFVLRIGHLSFMRTLLADLADGDKKKIRAFLDKREEEAAITYLRDIGRDDLCDPLIRLCGARTLEDVFAIIGEIPEAARVREMFAILDASGIPYEINPAIARGLDYYTGVVFECFAEGLGAENQILGGGAYRLAHLFGGEDTPSAGFAIGFDRVMVALGEASWVPWQPQVMIITTNEGRDYALTIAGQFRMNGIITETDLMDRSFSAQMKAAGKSADYAVIIGKDEVETGTITLKDLKAGTQEKITADEAIQKLTSA.

The protein belongs to the class-II aminoacyl-tRNA synthetase family.

The protein resides in the cytoplasm. It carries out the reaction tRNA(His) + L-histidine + ATP = L-histidyl-tRNA(His) + AMP + diphosphate + H(+). This is Histidine--tRNA ligase from Methanospirillum hungatei JF-1 (strain ATCC 27890 / DSM 864 / NBRC 100397 / JF-1).